An 86-amino-acid polypeptide reads, in one-letter code: Weak neurotoxin 5 (86 aa).

The N-terminal stretch at 1-21 is a signal peptide; it reads MKTLLLTLVVVTIVCLDLGYT. 5 cysteine pairs are disulfide-bonded: C24-C45, C27-C32, C38-C63, C67-C78, and C79-C84.

It belongs to the three-finger toxin family. Ancestral subfamily. Orphan group II sub-subfamily. As to expression, expressed by the venom gland.

The protein resides in the secreted. In terms of biological role, binds with low affinity to muscular and very low affinity to neuronal (alpha-7/CHRNA7) nicotinic acetylcholine receptor (nAChR). In Naja sputatrix (Malayan spitting cobra), this protein is Weak neurotoxin 5.